The chain runs to 293 residues: 4-diphosphocytidyl-2-C-methyl-D-erythritol kinase (293 aa).

Residue K16 is part of the active site. 99-109 (PMGAGLGGGSS) serves as a coordination point for ATP. D141 is an active-site residue.

It belongs to the GHMP kinase family. IspE subfamily.

It catalyses the reaction 4-CDP-2-C-methyl-D-erythritol + ATP = 4-CDP-2-C-methyl-D-erythritol 2-phosphate + ADP + H(+). It functions in the pathway isoprenoid biosynthesis; isopentenyl diphosphate biosynthesis via DXP pathway; isopentenyl diphosphate from 1-deoxy-D-xylulose 5-phosphate: step 3/6. Catalyzes the phosphorylation of the position 2 hydroxy group of 4-diphosphocytidyl-2C-methyl-D-erythritol. In Burkholderia orbicola (strain MC0-3), this protein is 4-diphosphocytidyl-2-C-methyl-D-erythritol kinase.